The sequence spans 533 residues: Retinoic acid receptor RXR-beta (533 aa).

The interval 1-24 (MSWAARPPFLPQRHAAGQCGPVGV) is disordered. A modulating region spans residues 1 to 204 (MSWAARPPFL…PGGPGAGKRL (204 aa)). An Omega-N-methylarginine modification is found at arginine 25. A disordered region spans residues 37–183 (RRRRPWLDPA…GPPEDVKPPV (147 aa)). Positions 46 to 61 (AAAAAAAAAAGEQQTP) are enriched in low complexity. The segment covering 67-82 (EAGRDGMGDSGRDSRS) has biased composition (basic and acidic residues). Residues 83–94 (PDSSSPNPLSQG) show a composition bias toward low complexity. 2 stretches are compositionally biased toward pro residues: residues 95–109 (APPP…PPSS) and 118–129 (APPPPPMPPPQL). Residues 130–143 (GSPFPVISSSMGSP) show a composition bias toward low complexity. Pro residues predominate over residues 144–153 (GLPPPAPPGF). 2 NR C4-type zinc fingers span residues 205-225 (CAIC…CEGC) and 241-265 (CRDN…YQKC). A DNA-binding region (nuclear receptor) is located at residues 205 to 270 (CAICGDRSSG…RYQKCLATGM (66 aa)). The interval 271–295 (KREAVQEERQRGKDKDGDGEGAGGA) is hinge. Positions 276–288 (QEERQRGKDKDGD) are enriched in basic and acidic residues. Disordered regions lie at residues 276–299 (QEER…PEEM) and 313–336 (QKSD…NDPV). In terms of domain architecture, NR LBD spans 296-529 (PEEMPVDRIL…TFLMEMLEAP (234 aa)). Over residues 320–329 (EGPGGTGGSG) the composition is skewed to gly residues.

Belongs to the nuclear hormone receptor family. NR2 subfamily. Homodimer (in vitro). Heterodimer with other retinoic acid receptor family members. Binds DNA preferentially as a RAR/RXR heterodimer. Interacts with NR1H3. Interacts with AKAP13.

Its subcellular location is the nucleus. It localises to the cytoplasm. Functionally, receptor for retinoic acid. Retinoic acid receptors bind as heterodimers to their target response elements in response to their ligands, all-trans or 9-cis retinoic acid, and regulate gene expression in various biological processes. The RAR/RXR heterodimers bind to the retinoic acid response elements (RARE). This is Retinoic acid receptor RXR-beta (RXRB) from Canis lupus familiaris (Dog).